The chain runs to 449 residues: UMP-CMP kinase 2, mitochondrial (449 aa).

Residues 1-98 (MAFARRLLRG…VRAARLHQRL (98 aa)) constitute a mitochondrion transit peptide. 259-266 (GLDATGKT) is an ATP binding site. The stretch at 380–412 (EERLQRLQGRGMEKTREEAELEANSVFRQKVEM) forms a coiled coil.

This sequence belongs to the thymidylate kinase family. In terms of tissue distribution, high levels are observed in myeloid, lymphoid and mesenchymal tissues.

Its subcellular location is the mitochondrion. The catalysed reaction is CMP + ATP = CDP + ADP. The enzyme catalyses dCMP + ATP = dCDP + ADP. It carries out the reaction a 2'-deoxyribonucleoside 5'-diphosphate + ATP = a 2'-deoxyribonucleoside 5'-triphosphate + ADP. It catalyses the reaction a ribonucleoside 5'-diphosphate + ATP = a ribonucleoside 5'-triphosphate + ADP. Functionally, mitochondrial nucleotide monophosphate kinase needed for salvage dNTP synthesis that mediates immunomodulatory and antiviral activities through IFN-dependent and IFN-independent pathways. Restricts the replication of multiple viruses including flaviviruses or coronaviruses. Together with viperin/RSAD2 and ddhCTP, suppresses the replication of several coronaviruses through inhibition of the viral RNA-dependent RNA polymerase activities. Concerning flaviviruses, restricts RNA translation when localized to the mitochondria independently of its kinase activity. Is able to phosphorylate dUMP, dCMP, CMP, UMP and monophosphates of the pyrimidine nucleoside analogs ddC, dFdC, araC, BVDU and FdUrd with ATP as phosphate donor. Efficacy is highest for dUMP followed by dCMP while CMP and UMP are poor substrates. Controls therefore mitochondrial DNA synthesis by supplying required deoxyribonucleotides. CMPK2-dependent mitochondrial DNA synthesis is necessary for the production of oxidized mitochondrial DNA fragments after exposure to NLRP3 activators. In turn, cytosolic oxidized mtDNA associates with the NLRP3 inflammasome complex and is required for its activation. This chain is UMP-CMP kinase 2, mitochondrial (CMPK2), found in Homo sapiens (Human).